Reading from the N-terminus, the 209-residue chain is Ribonuclease HII (209 aa).

An RNase H type-2 domain is found at 6-209; it reads SLEAGIDEAG…IKRMTNSRLF (204 aa). Positions 12, 13, and 108 each coordinate a divalent metal cation.

It belongs to the RNase HII family. The cofactor is Mn(2+). Mg(2+) is required as a cofactor.

Its subcellular location is the cytoplasm. The catalysed reaction is Endonucleolytic cleavage to 5'-phosphomonoester.. Its function is as follows. Endonuclease that specifically degrades the RNA of RNA-DNA hybrids. The protein is Ribonuclease HII of Caldivirga maquilingensis (strain ATCC 700844 / DSM 13496 / JCM 10307 / IC-167).